The chain runs to 446 residues: Sulfoquinovose isomerase (446 aa).

It belongs to the SqvD family.

It catalyses the reaction 6-sulfo-beta-D-quinovose = 6-deoxy-6-sulfo-D-fructose. Its function is as follows. Part of the sulfo-TAL (or sulfo-SFT) pathway, a D-sulfoquinovose degradation pathway that produces sulfolactate (SL). Catalyzes the isomerization of sulfoquinovose (SQ) to 6-deoxy-6-sulfo-D-fructose (SF). In Priestia aryabhattai (Bacillus aryabhattai), this protein is Sulfoquinovose isomerase.